Consider the following 145-residue polypeptide: Ribonuclease H (145 aa).

The RNase H type-1 domain maps to methionine 1–alanine 142. Residues aspartate 10, glutamate 48, aspartate 70, and aspartate 134 each coordinate Mg(2+).

The protein belongs to the RNase H family. In terms of assembly, monomer. The cofactor is Mg(2+).

The protein localises to the cytoplasm. It catalyses the reaction Endonucleolytic cleavage to 5'-phosphomonoester.. Endonuclease that specifically degrades the RNA of RNA-DNA hybrids. In Neisseria meningitidis serogroup C / serotype 2a (strain ATCC 700532 / DSM 15464 / FAM18), this protein is Ribonuclease H.